Here is a 241-residue protein sequence, read N- to C-terminus: Endo-chitosanase B (241 aa).

The signal sequence occupies residues 1–17 (MRLSEILAVALVTGATA). Residue asparagine 86 is glycosylated (N-linked (GlcNAc...) asparagine).

It belongs to the glycosyl hydrolase 75 family.

It localises to the secreted. It catalyses the reaction Endohydrolysis of beta-(1-&gt;4)-linkages between D-glucosamine residues in a partly acetylated chitosan.. Functionally, chitosanase catalyzing the endo-type cleavage of chitosan, the deacylated form of chitin. Chitosanase may be crucial in the degradation of the deacetylated portion of chitin in the fungal cell wall. Chitoolisaccharides produced by the hydrolysis of partially N-acetylated chitosan are known to have many biological activities, including antibacterial activity, immune-enhancing effects, and elicitor activity. This chain is Endo-chitosanase B (csnB), found in Aspergillus oryzae (strain ATCC 42149 / RIB 40) (Yellow koji mold).